We begin with the raw amino-acid sequence, 413 residues long: Glutamyl-tRNA reductase (413 aa).

Residues 57 to 60 (TCNR), serine 113, 118 to 120 (DFE), and glutamine 124 each bind substrate. Cysteine 58 serves as the catalytic Nucleophile. Residue 193–198 (GTGKIG) participates in NADP(+) binding.

This sequence belongs to the glutamyl-tRNA reductase family. Homodimer.

It catalyses the reaction (S)-4-amino-5-oxopentanoate + tRNA(Glu) + NADP(+) = L-glutamyl-tRNA(Glu) + NADPH + H(+). Its pathway is porphyrin-containing compound metabolism; protoporphyrin-IX biosynthesis; 5-aminolevulinate from L-glutamyl-tRNA(Glu): step 1/2. Functionally, catalyzes the NADPH-dependent reduction of glutamyl-tRNA(Glu) to glutamate 1-semialdehyde (GSA). In Flavobacterium psychrophilum (strain ATCC 49511 / DSM 21280 / CIP 103535 / JIP02/86), this protein is Glutamyl-tRNA reductase.